The following is a 1183-amino-acid chain: Peroxisomal ATPase PEX6 (1183 aa).

The interval 161–205 is disordered; the sequence is ESRGKKTGEPEDGPLANGIDLNGVDDSDSDEDVLSQGDDDDENNV. Residues 183–204 show a composition bias toward acidic residues; that stretch reads GVDDSDSDEDVLSQGDDDDENN. Positions 576 to 785 are AAA-cassette D1; sequence LPNNYISPVH…VERAMTACSE (210 aa). Positions 878–1070 are AAA-cassette D2; sequence GILFYGPPGT…CSDAMLKAIT (193 aa). Residue 883 to 890 coordinates ATP; the sequence is GPPGTGKT. The segment at 1160–1183 is disordered; it reads IMVDGPGTGGEGAFGDDGDEEGLY. The segment covering 1173-1183 has biased composition (acidic residues); sequence FGDDGDEEGLY.

The protein belongs to the AAA ATPase family. Interacts with PEX1; forming the PEX1-PEX6 AAA ATPase complex, which is composed of a heterohexamer formed by a trimer of PEX1-PEX6 dimers.

It is found in the cytoplasm. It localises to the cytosol. The protein resides in the peroxisome membrane. It catalyses the reaction ATP + H2O = ADP + phosphate + H(+). Component of the PEX1-PEX6 AAA ATPase complex, a protein dislocase complex that mediates the ATP-dependent extraction of the PEX5 receptor from peroxisomal membranes, an essential step for PEX5 recycling. Specifically recognizes PEX5 monoubiquitinated at 'Cys-6', and pulls it out of the peroxisome lumen through the PEX2-PEX10-PEX12 retrotranslocation channel. Extraction by the PEX1-PEX6 AAA ATPase complex is accompanied by unfolding of the TPR repeats and release of bound cargo from PEX5. Regulates autophagy and biogenesis of peroxisomes and Woronin bodies. Plays important roles in mycelial growth and development and stress response. Is also essential for conidiation and fatty acid utilization. Required for nematode predation via trap formation. In Arthrobotrys oligospora (strain ATCC 24927 / CBS 115.81 / DSM 1491) (Nematode-trapping fungus), this protein is Peroxisomal ATPase PEX6.